The following is a 274-amino-acid chain: MQFAKMHGLGNDFMVVDAVTQNVYFSPELIRRLADRHCGVGFDQLLVVEPPYDPELDFHYRIFNADGSEVAQCGNGARCFARFVRLKGLTNKRDIAVSTQTGRMVLSVTDDELVRVNMGEPNFEPQQVPFRAVKAEKTYIMRADEHTVLCGVVSMGNPHCVIQVEDVDTAKVETLGPLLESHERFPERANIGFMQVVDSHTVRLRVYERGAGETQACGSGACAAVAVGIQQGLLSANVRVSLPGGDLDIQWDGPGHPLFMTGPATHVYDGFIHL.

Asparagine 11, glutamine 44, and asparagine 64 together coordinate substrate. Cysteine 73 (proton donor) is an active-site residue. Substrate is bound by residues 74-75 (GN), asparagine 157, asparagine 190, and 208-209 (ER). Cysteine 217 acts as the Proton acceptor in catalysis. 218-219 (GS) contacts substrate.

This sequence belongs to the diaminopimelate epimerase family. As to quaternary structure, homodimer.

Its subcellular location is the cytoplasm. The catalysed reaction is (2S,6S)-2,6-diaminopimelate = meso-2,6-diaminopimelate. It functions in the pathway amino-acid biosynthesis; L-lysine biosynthesis via DAP pathway; DL-2,6-diaminopimelate from LL-2,6-diaminopimelate: step 1/1. In terms of biological role, catalyzes the stereoinversion of LL-2,6-diaminopimelate (L,L-DAP) to meso-diaminopimelate (meso-DAP), a precursor of L-lysine and an essential component of the bacterial peptidoglycan. The sequence is that of Diaminopimelate epimerase from Pectobacterium carotovorum subsp. carotovorum (strain PC1).